The sequence spans 321 residues: Isopenicillin N synthase (321 aa).

Residues 1 to 42 (MPVLMPSADVPTIDISPQLFGTDPTPRRTSRGRSTRPARGSG) form a disordered region. Residues R87, Y91, and Y188 each coordinate isopenicillin N. Positions 87, 91, 188, 213, and 215 each coordinate N-[(5S)-5-amino-5-carboxypentanoyl]-L-cysteinyl-D-valine. A Fe2OG dioxygenase domain is found at 179-287 (TLSAVSMIRY…RLSLPFFLHA (109 aa)). Residues H213, D215, and H269 each contribute to the Fe(2+) site. 2-oxoglutarate is bound at residue R278. S280 serves as a coordination point for isopenicillin N. N-[(5S)-5-amino-5-carboxypentanoyl]-L-cysteinyl-D-valine is bound at residue S280.

It belongs to the iron/ascorbate-dependent oxidoreductase family. Fe cation serves as cofactor. L-ascorbate is required as a cofactor.

The enzyme catalyses N-[(5S)-5-amino-5-carboxypentanoyl]-L-cysteinyl-D-valine + O2 = isopenicillin N + 2 H2O. The protein operates within antibiotic biosynthesis; penicillin G biosynthesis; penicillin G from L-alpha-aminoadipate and L-cysteine and L-valine: step 2/3. In terms of biological role, removes, in the presence of oxygen, 4 hydrogen atoms from delta-L-(alpha-aminoadipyl)-L-cysteinyl-D-valine (ACV) to form the azetidinone and thiazolidine rings of isopenicillin. The polypeptide is Isopenicillin N synthase (pcbC) (Streptantibioticus cattleyicolor (Streptomyces cattleya)).